A 530-amino-acid polypeptide reads, in one-letter code: Inactive ubiquitin carboxyl-terminal hydrolase 17-like protein 7 (530 aa).

One can recognise a USP domain in the interval 80-375 (AGLQKIGNTF…QAYVLFYIQK (296 aa)). The span at 382–392 (SESVSRGREPR) shows a compositional bias: basic and acidic residues. 3 disordered regions span residues 382–412 (SESV…KRDH), 431–454 (ESTL…NVRK), and 490–530 (SSTK…LVCQ). Over residues 490–512 (SSTKPTDQESMNTGTLASLQGST) the composition is skewed to polar residues. The segment covering 513–524 (RRSKGNNKHSKR) has biased composition (basic residues).

Belongs to the peptidase C19 family. USP17 subfamily.

It localises to the nucleus. Its subcellular location is the endoplasmic reticulum. This is Inactive ubiquitin carboxyl-terminal hydrolase 17-like protein 7 (USP17L7) from Homo sapiens (Human).